A 213-amino-acid chain; its full sequence is Neuroligin-4, X-linked (213 aa).

The disordered stretch occupies residues 1–56 (FQYVSTTTKVPPPDMTSFPYGTRRSPAKIWPTTKRPAITPANNPKHSKDPHKTGPE). The Extracellular portion of the chain corresponds to 1-73 (FQYVSTTTKV…TKRDYSTELS (73 aa)). Residues 46-55 (HSKDPHKTGP) show a composition bias toward basic and acidic residues. The chain crosses the membrane as a helical span at residues 74-94 (VTIAVGASLLFLNILAFAALY). The Cytoplasmic portion of the chain corresponds to 95-213 (YKKDKRRHET…LPHGHSTTRV (119 aa)). Position 109 is a phosphoserine (S109).

It belongs to the type-B carboxylesterase/lipase family. In terms of assembly, homodimer. Interacts with NRXN1 in a calcium-dependent manner. Interaction with neurexins is mediated by heparan sulfate glycan modification on neurexin. Interacts through its C-terminus with DLG4/PSD-95 third PDZ domain.

It is found in the cell membrane. The protein localises to the postsynaptic density membrane. Cell surface protein involved in cell-cell-interactions via its interactions with neurexin family members. This Macaca mulatta (Rhesus macaque) protein is Neuroligin-4, X-linked (NLGN4X).